We begin with the raw amino-acid sequence, 515 residues long: Sodium/hydrogen exchanger 9B1 (515 aa).

Residues 1–10 are compositionally biased toward basic and acidic residues; the sequence is MHTTESKNEH. The disordered stretch occupies residues 1-32; the sequence is MHTTESKNEHLEDENFQTSTTPQSLIDPNNTA. The span at 16–32 shows a compositional bias: polar residues; sequence FQTSTTPQSLIDPNNTA. The next 13 membrane-spanning stretches (helical) occupy residues 66-86, 95-115, 116-136, 152-172, 187-207, 215-235, 260-280, 284-304, 337-357, 368-388, 407-427, 431-451, and 472-492; these read VIIT…SILG, LFGL…LQLI, RIPL…GFTI, WSSI…GLGL, LAVG…HFIM, FLLG…YMMV, ILAI…GGIL, IASI…GFFV, IGLH…AGTK, IITT…GAEV, LALC…GFSF, IFIA…GPLA, and VAFL…GILG.

This sequence belongs to the monovalent cation:proton antiporter 1 (CPA1) transporter (TC 2.A.36) family. As to expression, expressed only in the testis.

Its subcellular location is the cell projection. It localises to the cilium. The protein localises to the flagellum membrane. In terms of biological role, sperm-specific Na(+)/H(+) exchanger involved in intracellular pH regulation of spermatozoa. Involved in sperm motility and fertility. The polypeptide is Sodium/hydrogen exchanger 9B1 (Homo sapiens (Human)).